The primary structure comprises 330 residues: Probable xanthine dehydrogenase subunit A (330 aa).

Could be composed of four subunits: PucA, PucC, PucD and PucE.

It carries out the reaction xanthine + NAD(+) + H2O = urate + NADH + H(+). The enzyme catalyses hypoxanthine + NAD(+) + H2O = xanthine + NADH + H(+). The protein operates within purine metabolism; hypoxanthine degradation; urate from hypoxanthine: step 1/2. It functions in the pathway purine metabolism; hypoxanthine degradation; urate from hypoxanthine: step 2/2. In terms of biological role, oxidizes hypoxanthine and xanthine to uric acid. PucA subunit could exert a molybdenum cofactor recruiting function. This chain is Probable xanthine dehydrogenase subunit A (pucA), found in Bacillus subtilis (strain 168).